A 106-amino-acid chain; its full sequence is Synaptic plasticity regulator PANTS (106 aa).

The segment at 67–106 is disordered; that stretch reads LQQSEKTRLEGKQNNSPVWTLRKNPPPDWYLPLDPGKPRQ.

Belongs to the UPF0545 family. Rapidly degraded by proteolysis following neuronal stimulation, resulting in increased AMPA receptor clustering.

The protein resides in the synapse. It is found in the synaptic cleft. In terms of biological role, negatively regulates long-term potentiation and modulates adult synaptic plasticity. The polypeptide is Synaptic plasticity regulator PANTS (Xenopus laevis (African clawed frog)).